The following is a 715-amino-acid chain: Polyribonucleotide nucleotidyltransferase (715 aa).

Residues Asp487 and Asp493 each coordinate Mg(2+). One can recognise a KH domain in the interval 554–613 (PRLYTFKINPEKIRDVIGKGGAVIRALTEETGTTIDIQDDGTITIAATSGEAAAAARSRI). An S1 motif domain is found at 623–691 (GKIYEGTVLK…DRGRVKLSMK (69 aa)).

Belongs to the polyribonucleotide nucleotidyltransferase family. It depends on Mg(2+) as a cofactor.

Its subcellular location is the cytoplasm. It carries out the reaction RNA(n+1) + phosphate = RNA(n) + a ribonucleoside 5'-diphosphate. In terms of biological role, involved in mRNA degradation. Catalyzes the phosphorolysis of single-stranded polyribonucleotides processively in the 3'- to 5'-direction. This chain is Polyribonucleotide nucleotidyltransferase, found in Dechloromonas aromatica (strain RCB).